The following is a 173-amino-acid chain: Photosystem I assembly protein Ycf3 (173 aa).

TPR repeat units lie at residues 35–68, 72–105, and 120–153; these read AFSY…EIDP, SYIL…NPSL, and GEQA…APNS.

This sequence belongs to the Ycf3 family.

Its subcellular location is the plastid. The protein resides in the chloroplast thylakoid membrane. In terms of biological role, essential for the assembly of the photosystem I (PSI) complex. May act as a chaperone-like factor to guide the assembly of the PSI subunits. The sequence is that of Photosystem I assembly protein Ycf3 from Mesostigma viride (Green alga).